We begin with the raw amino-acid sequence, 120 residues long: NAD(P)H-quinone oxidoreductase subunit 3, chloroplastic (120 aa).

3 helical membrane passes run 9-29 (IFWA…LISG), 64-84 (MFAL…PWAM), and 88-108 (VLGV…ILGL).

The protein belongs to the complex I subunit 3 family. As to quaternary structure, NDH is composed of at least 16 different subunits, 5 of which are encoded in the nucleus.

The protein localises to the plastid. The protein resides in the chloroplast thylakoid membrane. It carries out the reaction a plastoquinone + NADH + (n+1) H(+)(in) = a plastoquinol + NAD(+) + n H(+)(out). The catalysed reaction is a plastoquinone + NADPH + (n+1) H(+)(in) = a plastoquinol + NADP(+) + n H(+)(out). NDH shuttles electrons from NAD(P)H:plastoquinone, via FMN and iron-sulfur (Fe-S) centers, to quinones in the photosynthetic chain and possibly in a chloroplast respiratory chain. The immediate electron acceptor for the enzyme in this species is believed to be plastoquinone. Couples the redox reaction to proton translocation, and thus conserves the redox energy in a proton gradient. The protein is NAD(P)H-quinone oxidoreductase subunit 3, chloroplastic of Capsella bursa-pastoris (Shepherd's purse).